Reading from the N-terminus, the 361-residue chain is Peptide chain release factor 1 (361 aa).

The residue at position 237 (Gln-237) is an N5-methylglutamine.

This sequence belongs to the prokaryotic/mitochondrial release factor family. Post-translationally, methylated by PrmC. Methylation increases the termination efficiency of RF1.

The protein localises to the cytoplasm. Its function is as follows. Peptide chain release factor 1 directs the termination of translation in response to the peptide chain termination codons UAG and UAA. This chain is Peptide chain release factor 1, found in Chromohalobacter salexigens (strain ATCC BAA-138 / DSM 3043 / CIP 106854 / NCIMB 13768 / 1H11).